Reading from the N-terminus, the 235-residue chain is Phosphoribosylaminoimidazole-succinocarboxamide synthase (235 aa).

The protein belongs to the SAICAR synthetase family.

The catalysed reaction is 5-amino-1-(5-phospho-D-ribosyl)imidazole-4-carboxylate + L-aspartate + ATP = (2S)-2-[5-amino-1-(5-phospho-beta-D-ribosyl)imidazole-4-carboxamido]succinate + ADP + phosphate + 2 H(+). It functions in the pathway purine metabolism; IMP biosynthesis via de novo pathway; 5-amino-1-(5-phospho-D-ribosyl)imidazole-4-carboxamide from 5-amino-1-(5-phospho-D-ribosyl)imidazole-4-carboxylate: step 1/2. The polypeptide is Phosphoribosylaminoimidazole-succinocarboxamide synthase (Streptococcus gordonii (strain Challis / ATCC 35105 / BCRC 15272 / CH1 / DL1 / V288)).